Here is a 272-residue protein sequence, read N- to C-terminus: MTVFPAGQQFQTEGECLPSYQVRLACRAGQADTTAGVAPGFVQGNLAILPEKYAAAFHRFCQLNPKPCPIIGMSDVGNPQIPALGLDLDIRTDLPRYRVWRDGELIEEPTDVMAHWRDDLVAFVVGCSFSFEEALLADDIPIRHIERKVRVPMYRTNIACTPAGPFAGPMVVSMRPLKPADAIRAVQITSRFPSVHGAPVHIGLPQSIGIADIANPDYGDPVPIAPDELPVFWACGVTPQAVIAAAKVPFAITHAPGLMLVTDLKNKHLAVL.

It belongs to the D-glutamate cyclase family.

The chain is Putative hydro-lyase RPD_1846 from Rhodopseudomonas palustris (strain BisB5).